The chain runs to 334 residues: ADP-L-glycero-D-manno-heptose-6-epimerase (334 aa).

NADP(+) is bound by residues 11–12 (FI), 32–33 (DN), Lys39, Lys54, 77–81 (QGACS), and Asn94. The active-site Proton acceptor is the Tyr141. Lys145 contributes to the NADP(+) binding site. Asn171 is a binding site for substrate. The NADP(+) site is built by Val172 and Lys180. Lys180 (proton acceptor) is an active-site residue. Residues Arg182, His189, 203–206 (FGSN), Arg216, and Tyr295 each bind substrate.

It belongs to the NAD(P)-dependent epimerase/dehydratase family. HldD subfamily. As to quaternary structure, homopentamer. NADP(+) is required as a cofactor.

It catalyses the reaction ADP-D-glycero-beta-D-manno-heptose = ADP-L-glycero-beta-D-manno-heptose. The protein operates within nucleotide-sugar biosynthesis; ADP-L-glycero-beta-D-manno-heptose biosynthesis; ADP-L-glycero-beta-D-manno-heptose from D-glycero-beta-D-manno-heptose 7-phosphate: step 4/4. It participates in bacterial outer membrane biogenesis; LOS core biosynthesis. In terms of biological role, catalyzes the interconversion between ADP-D-glycero-beta-D-manno-heptose and ADP-L-glycero-beta-D-manno-heptose via an epimerization at carbon 6 of the heptose. This Neisseria meningitidis serogroup B (strain ATCC BAA-335 / MC58) protein is ADP-L-glycero-D-manno-heptose-6-epimerase.